The chain runs to 581 residues: MAAVTSSCSTAISASSKTLAKPVAASFAPTNLSFSKLSPQSIRARRSITVGSALGATKVSAPPATHPVSLDFETSVFKKERVNLAGHEEYIVRGGRDLFHLLPDAFKGIKQIGVIGWGSQGPAQAQNLRDSLVEAKSDIVVKVGLRKGSSSFNEAREAGFSEEKGTLGDIWETISGSDLVLLLISDSAQADNYEKIFSHLKPNSILGLSHGFLLGHLQSIGLDFPKNFSVIAVCPKGMGPSVRRLYVQGKEINGAGINSSFGVHQDVDGRATNVALGWSVALGSPFTFATTLEQEYKSDIFGERGILLGAVHGIVESLFRRYTENGMSEDLAYKNTVESITGVISKTISTQGMLAVYNALSEDGKKEFEKAYSASFYPCMEILYECYEDVASGSEIRSVVLAGRRFYEKEGLPAFPMGKIDQTRMWKVGERVRSTRPAGDLGPLYPFTAGVFVAMMMAQIEVLRKKGHSYSEIINESVIESVDSLNPFMHARGVSFMVDNCSTTARLGSRKWAPRFDYILTQQALVAVDSGAPINQDLISNFVSDPVHGAIQVCAELRPTLDISVPAAADFVRPELRQCSN.

A chloroplast-targeting transit peptide spans 1–50 (MAAVTSSCSTAISASSKTLAKPVAASFAPTNLSFSKLSPQSIRARRSITV). The KARI N-terminal Rossmann domain maps to 92–290 (VRGGRDLFHL…ALGSPFTFAT (199 aa)). NADP(+) is bound by residues 113–120 (GVIGWGSQ), 146–151 (RKGSSS), and 185–189 (SDSAQ). The active site involves His-210. KARI C-terminal knotted domains follow at residues 291-439 (TLEQ…RPAG) and 440-576 (DLGP…RPEL). Residues Asp-299, Glu-303, Glu-476, and Glu-480 each contribute to the Mg(2+) site. Ser-502 is a substrate binding site.

This sequence belongs to the ketol-acid reductoisomerase family. As to quaternary structure, homodimer. Mg(2+) serves as cofactor.

It localises to the plastid. It is found in the chloroplast. The enzyme catalyses (2R)-2,3-dihydroxy-3-methylbutanoate + NADP(+) = (2S)-2-acetolactate + NADPH + H(+). The catalysed reaction is (2R,3R)-2,3-dihydroxy-3-methylpentanoate + NADP(+) = (S)-2-ethyl-2-hydroxy-3-oxobutanoate + NADPH + H(+). It participates in amino-acid biosynthesis; L-isoleucine biosynthesis; L-isoleucine from 2-oxobutanoate: step 2/4. Its pathway is amino-acid biosynthesis; L-valine biosynthesis; L-valine from pyruvate: step 2/4. The polypeptide is Ketol-acid reductoisomerase, chloroplastic (PGAAIR) (Pisum sativum (Garden pea)).